Reading from the N-terminus, the 203-residue chain is MALTLYVASSNAGKLRDFRVAAGHTATEILPLPGLAEIDAPEETGTTFAENARLKAEFYSRCRPGGLVLADDSGLEVRALGLLPGVRSARFAEDAEYLPGSPLSADERNNLLLMDRMRGVEDRAGRYVCVLSVARDGVEIASAEGEVAGEILGVPQGTGGFGYDPLFYLPELEKTMAEIDLETKLRLSHRGAALRVLLARLPG.

9–14 (SSNAGK) is a substrate binding site. 2 residues coordinate Mg(2+): Glu-42 and Asp-72. Asp-72 functions as the Proton acceptor in the catalytic mechanism. Residues Ser-73, 161–164 (FGYD), Lys-184, and 189–190 (HR) each bind substrate.

This sequence belongs to the HAM1 NTPase family. As to quaternary structure, homodimer. Mg(2+) is required as a cofactor.

The catalysed reaction is XTP + H2O = XMP + diphosphate + H(+). It catalyses the reaction dITP + H2O = dIMP + diphosphate + H(+). It carries out the reaction ITP + H2O = IMP + diphosphate + H(+). Its function is as follows. Pyrophosphatase that catalyzes the hydrolysis of nucleoside triphosphates to their monophosphate derivatives, with a high preference for the non-canonical purine nucleotides XTP (xanthosine triphosphate), dITP (deoxyinosine triphosphate) and ITP. Seems to function as a house-cleaning enzyme that removes non-canonical purine nucleotides from the nucleotide pool, thus preventing their incorporation into DNA/RNA and avoiding chromosomal lesions. This chain is dITP/XTP pyrophosphatase, found in Acidobacterium capsulatum (strain ATCC 51196 / DSM 11244 / BCRC 80197 / JCM 7670 / NBRC 15755 / NCIMB 13165 / 161).